Reading from the N-terminus, the 337-residue chain is Phenylalanine--tRNA ligase alpha subunit (337 aa).

Glu-258 serves as a coordination point for Mg(2+).

It belongs to the class-II aminoacyl-tRNA synthetase family. Phe-tRNA synthetase alpha subunit type 1 subfamily. Tetramer of two alpha and two beta subunits. Mg(2+) is required as a cofactor.

The protein localises to the cytoplasm. The enzyme catalyses tRNA(Phe) + L-phenylalanine + ATP = L-phenylalanyl-tRNA(Phe) + AMP + diphosphate + H(+). The chain is Phenylalanine--tRNA ligase alpha subunit from Burkholderia mallei (strain ATCC 23344).